Reading from the N-terminus, the 481-residue chain is MTDRADADRPATSPTGLRLYDTMTGAVRDFVPLRDGHVSIYLCGATVQGLPHIGHVRSGVAFDVLRRWLTAKGLDVAFIRNVTDIDDKILNKAADAGRPWWEWAATYERAFSAAYDALGVLPPSAEPRATGHITQMVELIERLIDRGHAYTGDGDVYFNVATLPDYGKLSGHRIDDVHQGEGVATGKRDQRDFTLWKGAKPGEPSWPTPWGRGRPGWHTECVAMCEAYLGAEFDIHAGGMDLVFPHHENEIAQAEAAGDGFARFWLHNGWVTMGGEKMSKSLGNVLSIPAVLQRVRAAELRYYLGSAHYRSMLEFSETALQDAVKAYAGVEDFLHRVRTRVGTVVPGDWTPKFAAALDDDLSVPIALAEVHAARAVGNRALDSGDHETAMTQARSIRAMMGILGCDPLDERWESRDETSAALAAIDVLVRWALDSRAEARNRKDWATADQIRDRLKEAGIEVTDTADGPQWSLLDGDSKDV.

Residue Cys-43 coordinates Zn(2+). Positions 45 to 55 (ATVQGLPHIGH) match the 'HIGH' region motif. Residues Cys-221, His-246, and Glu-250 each contribute to the Zn(2+) site. The 'KMSKS' region motif lies at 277 to 281 (KMSKS). Residue Lys-280 participates in ATP binding.

The protein belongs to the class-I aminoacyl-tRNA synthetase family. In terms of assembly, monomer. Zn(2+) is required as a cofactor.

It is found in the cytoplasm. The enzyme catalyses tRNA(Cys) + L-cysteine + ATP = L-cysteinyl-tRNA(Cys) + AMP + diphosphate. This chain is Cysteine--tRNA ligase, found in Mycobacterium sp. (strain JLS).